Here is a 944-residue protein sequence, read N- to C-terminus: Protein unc-45 homolog A (944 aa).

The segment at 1-25 (MTVSGPGTPEPRPSDPGASSAEELR) is disordered. TPR repeat units lie at residues 21 to 54 (AEEL…GATP), 58 to 91 (AILH…DGGD), and 92 to 125 (VKAL…EPKN). An N6-acetyllysine modification is found at K70. Position 483 is an N6-acetyllysine (K483).

Interacts with PGR isoforms A and B as well as with NR3C1 in the absence of ligand, and with HSP90AB1. Binding to HSP90AB1 involves 2 UNC45A monomers per HSP90AB1 dimer.

Its subcellular location is the cytoplasm. The protein localises to the perinuclear region. It is found in the nucleus. In terms of biological role, may act as co-chaperone for HSP90 (Potential). Prevents the stimulation of HSP90AB1 ATPase activity by AHSA1. Positive factor in promoting PGR function in the cell. May be necessary for proper folding of myosin (Potential). Necessary for normal cell proliferation. Necessary for normal myotube formation and myosin accumulation during muscle cell development. May play a role in erythropoiesis in stroma cells in the spleen. In Rattus norvegicus (Rat), this protein is Protein unc-45 homolog A (Unc45a).